We begin with the raw amino-acid sequence, 585 residues long: Arginine--tRNA ligase (585 aa).

The short motif at 131–141 (ANPTGPMHVGH) is the 'HIGH' region element.

This sequence belongs to the class-I aminoacyl-tRNA synthetase family. In terms of assembly, monomer.

The protein localises to the cytoplasm. It carries out the reaction tRNA(Arg) + L-arginine + ATP = L-arginyl-tRNA(Arg) + AMP + diphosphate. The protein is Arginine--tRNA ligase of Sinorhizobium medicae (strain WSM419) (Ensifer medicae).